The chain runs to 876 residues: Alanine--tRNA ligase (876 aa).

The residue at position 74 (Lys-74) is an N6-acetyllysine. 4 residues coordinate Zn(2+): His-564, His-568, Cys-666, and His-670.

The protein belongs to the class-II aminoacyl-tRNA synthetase family. As to quaternary structure, homotetramer. Zn(2+) is required as a cofactor.

Its subcellular location is the cytoplasm. The catalysed reaction is tRNA(Ala) + L-alanine + ATP = L-alanyl-tRNA(Ala) + AMP + diphosphate. Catalyzes the attachment of alanine to tRNA(Ala) in a two-step reaction: alanine is first activated by ATP to form Ala-AMP and then transferred to the acceptor end of tRNA(Ala). Also edits incorrectly charged Ser-tRNA(Ala) and Gly-tRNA(Ala) via its editing domain. This is Alanine--tRNA ligase from Shigella boydii serotype 18 (strain CDC 3083-94 / BS512).